Reading from the N-terminus, the 410-residue chain is MDSFSQKLNTYAQLAVEVGVNVQKGQYVVVNASTDVRDFVRLIVKHAYEKGAKNVTVNWQDDEVAKLKYELAPFEAFEEYPEWEAKGREELAKNGAAFISVVSSNPDLLKGIDSKRIAAFQKAAGKALHTYRQYIQSDKVSWTVVGAASAGWAHKVFPGKSEEEAIHLLWEEIFKATRVNEDNPVQAWINHDQNLHEKVDHLNERHYAALHYQAEGTDLTIKLPRKHVWAGAGSVNESGHEFMANMPTEEVFTLPQKDGVDGVVSSTKPLSYGGNIIENFTLTFENGRIVDIKAEKGEDILKELVETDEGSHYLGEVALVPYDSPISQSNILFYNTLFDENASNHLAIGSAYAFNIEGGKQMSREELVKEGLNESITHVDFMIGSKDMNIDGITADGKREPIFRNGNWAF.

A divalent metal cation contacts are provided by Glu250, Glu316, Glu340, His345, His378, and Asp380.

The protein belongs to the peptidase M29 family. The cofactor is Co(2+). Zn(2+) is required as a cofactor. It depends on Mg(2+) as a cofactor.

Its function is as follows. Metal-dependent exopeptidase. The protein is Aminopeptidase AmpS (ampS) of Bacillus subtilis (strain 168).